We begin with the raw amino-acid sequence, 465 residues long: Argininosuccinate lyase (465 aa).

The protein belongs to the lyase 1 family. Argininosuccinate lyase subfamily.

The protein localises to the cytoplasm. It catalyses the reaction 2-(N(omega)-L-arginino)succinate = fumarate + L-arginine. The protein operates within amino-acid biosynthesis; L-arginine biosynthesis; L-arginine from L-ornithine and carbamoyl phosphate: step 3/3. This is Argininosuccinate lyase from Halorhodospira halophila (strain DSM 244 / SL1) (Ectothiorhodospira halophila (strain DSM 244 / SL1)).